The chain runs to 136 residues: Small ribosomal subunit protein eS6 (136 aa).

The protein belongs to the eukaryotic ribosomal protein eS6 family.

The sequence is that of Small ribosomal subunit protein eS6 from Methanosarcina acetivorans (strain ATCC 35395 / DSM 2834 / JCM 12185 / C2A).